A 1411-amino-acid polypeptide reads, in one-letter code: Alpha-latroinsectotoxin-Lt1a (1411 aa).

Positions 1-35 (ACSSPEVSIFHFFVYAGSFVKNFKKMKGSSAISKR) are excised as a propeptide. Residues 245–264 (ALYALFYGTETFISIMFYLV) form a helix H8 is the probable transmembrane region of the tetrameric pore inserted in the target cell membrane region. 20 ANK repeats span residues 462-495 (DIHR…NVSE), 499-528 (LGRG…NLLE), 533-562 (NGYT…DVNV), 567-597 (DLFT…DLNA), 601-630 (SGFT…VINI), 634-663 (VGLT…YLND), 667-697 (NGMT…NINA), 702-732 (KKWT…NIRL), 736-765 (GGIN…DVTR), 769-798 (KGFS…NVND), 802-831 (SGVT…DIKA), 835-864 (NSQM…SLMN), 869-898 (RNEY…NVNE), 902-931 (NGNT…NFRL), 935-965 (ERKT…NLQA), 968-999 (RGKT…LNES), 1000-1029 (ECNP…NPAE), 1080-1109 (QENT…DPNQ), 1112-1142 (DGDP…DINT), and 1146-1175 (ERFT…DVNA). Positions 1196-1411 (QSSRFLRSGH…KVNSNVSQIK (216 aa)) are excised as a propeptide. The segment covering 1230-1249 (DKLTQQISSKGTRSDSNSTE) has biased composition (polar residues). The segment at 1230–1254 (DKLTQQISSKGTRSDSNSTEGKMHS) is disordered. The ANK 21 repeat unit spans residues 1331–1361 (NVHSKIYKAIMSGRRSVISEMLCSFAEEYSK).

Belongs to the cationic peptide 01 (latrotoxin) family. 02 (alpha-latroinsectotoxin) subfamily. In terms of assembly, homotetramer in membranes. Expressed by the venom gland.

The protein resides in the secreted. The protein localises to the target cell membrane. Insecticidal presynaptic neurotoxin that induces massive neurotransmitter release at insect (but not vertebrate) neuromuscular junctions. Native toxin forms cation-permeable pores (with high permeability to calcium) in lipid membranes locust muscle membrane and artificial lipid bilayers. May bind to insect neurexin-1 homolog, insect adhesion G protein-coupled receptor L1 homolog, and insect receptor-type tyrosine-protein phosphatase S homolog, and induces neurotransmitter exocytosis both by forming tetrameric pores in membranes and signaling via G protein-coupled receptor. Oligomerization is a process independent of divalent cations. The toxin forms channels with 0.55-0.58 nm entrance diameter and a relatively small conductance in planar phospholipid membranes. The protein is Alpha-latroinsectotoxin-Lt1a of Latrodectus tredecimguttatus (Mediterranean black widow spider).